We begin with the raw amino-acid sequence, 220 residues long: 7-cyano-7-deazaguanine synthase (220 aa).

ATP is bound at residue 7 to 17 (ISGGMDSSTAA). Residues Cys-187, Cys-195, Cys-198, and Cys-201 each coordinate Zn(2+).

This sequence belongs to the QueC family. Zn(2+) is required as a cofactor.

The catalysed reaction is 7-carboxy-7-deazaguanine + NH4(+) + ATP = 7-cyano-7-deazaguanine + ADP + phosphate + H2O + H(+). The protein operates within purine metabolism; 7-cyano-7-deazaguanine biosynthesis. Catalyzes the ATP-dependent conversion of 7-carboxy-7-deazaguanine (CDG) to 7-cyano-7-deazaguanine (preQ(0)). In Campylobacter hominis (strain ATCC BAA-381 / DSM 21671 / CCUG 45161 / LMG 19568 / NCTC 13146 / CH001A), this protein is 7-cyano-7-deazaguanine synthase.